The primary structure comprises 162 residues: Protein A49R (162 aa).

It belongs to the poxviridae A49 protein family. Interacts with host BTRC; this interaction inhibits NF-kappa-B activation.

Its subcellular location is the host cytoplasm. The protein localises to the host nucleus. Functionally, plays a role in the inhibition of host NF-kappa-B activation. Interacts with host BTRC and thereby diminishes ubiquitination of NF-kappa-B inhibitor alpha/NFKBIA. This stabilizes NFKBIA and its interaction with NF-kappaB, so retaining p65/RELA in the cytoplasm and preventing NF-kappa-B-dependent gene expression. The chain is Protein A49R from Bos taurus (Bovine).